The sequence spans 461 residues: BSD domain-containing protein 1 (461 aa).

Residues S123 and S197 each carry the phosphoserine modification. The BSD domain maps to 177-229 (WLSQFCLEEKKGEISELLVGSPSIRALYTKMVPAAVSHSEFWHRYFYKVHQLE). Residues 239–384 (KQRAEQSISE…SGPEPRPPAR (146 aa)) are disordered. Positions 250-259 (PGWEEEEEEL) are enriched in acidic residues. Residues 295–318 (LVTPVEPPTEVTPSESSESVSLVT) are compositionally biased toward low complexity. T387 carries the post-translational modification Phosphothreonine. The interval 398–430 (VFELNSDSGKSTPSNNGKKGSSTDISEDWEKDF) is disordered. Positions 402 to 421 (NSDSGKSTPSNNGKKGSSTD) are enriched in polar residues. Phosphoserine is present on residues S418, S419, and S449.

The polypeptide is BSD domain-containing protein 1 (BSDC1) (Bos taurus (Bovine)).